A 401-amino-acid chain; its full sequence is Glutamyl-tRNA reductase (401 aa).

Residues 49–52, serine 92, 97–99, and glutamine 103 each bind substrate; these read TCNR and END. The Nucleophile role is filled by cysteine 50. 171–176 provides a ligand contact to NADP(+); the sequence is GNGKMA.

Belongs to the glutamyl-tRNA reductase family. In terms of assembly, homodimer.

It carries out the reaction (S)-4-amino-5-oxopentanoate + tRNA(Glu) + NADP(+) = L-glutamyl-tRNA(Glu) + NADPH + H(+). The protein operates within porphyrin-containing compound metabolism; protoporphyrin-IX biosynthesis; 5-aminolevulinate from L-glutamyl-tRNA(Glu): step 1/2. Functionally, catalyzes the NADPH-dependent reduction of glutamyl-tRNA(Glu) to glutamate 1-semialdehyde (GSA). The chain is Glutamyl-tRNA reductase from Picrophilus torridus (strain ATCC 700027 / DSM 9790 / JCM 10055 / NBRC 100828 / KAW 2/3).